The chain runs to 436 residues: 2-aminohexano-6-lactam racemase (436 aa).

Residues 110-111 (GS), Tyr137, and 238-241 (DEVK) contribute to the pyridoxal 5'-phosphate site. Residue Tyr137 is part of the active site. An N6-(pyridoxal phosphate)lysine modification is found at Lys267. A pyridoxal 5'-phosphate-binding site is contributed by Thr295.

This sequence belongs to the class-III pyridoxal-phosphate-dependent aminotransferase family. In terms of assembly, monomer. Requires pyridoxal 5'-phosphate as cofactor.

The catalysed reaction is L-2-aminohexano-6-lactam = D-2-aminohexano-6-lactam. Its function is as follows. catalyzes the interconversion of L-alpha-amino-epsilon-caprolactam and D-alpha-amino-epsilon-caprolactam. This is 2-aminohexano-6-lactam racemase from Achromobacter obae.